The chain runs to 475 residues: Argininosuccinate lyase (475 aa).

The protein belongs to the lyase 1 family. Argininosuccinate lyase subfamily.

It localises to the cytoplasm. It catalyses the reaction 2-(N(omega)-L-arginino)succinate = fumarate + L-arginine. It participates in amino-acid biosynthesis; L-arginine biosynthesis; L-arginine from L-ornithine and carbamoyl phosphate: step 3/3. The sequence is that of Argininosuccinate lyase from Leifsonia xyli subsp. xyli (strain CTCB07).